Here is a 783-residue protein sequence, read N- to C-terminus: Protein SEY1 (783 aa).

Over 1-677 the chain is Cytoplasmic; sequence MTSQAIQLID…KRSIVTSSTH (677 aa). In terms of domain architecture, GB1/RHD3-type G spans 33 to 265; it reads GFNYHVISVF…YLLKPNYHHK (233 aa). 43-50 contributes to the GTP binding site; the sequence is GSQSSGKS. The stretch at 449-472 forms a coiled coil; that stretch reads HEKKLQLRESELNALLSKIKKQLT. The chain crosses the membrane as a helical span at residues 678-698; it reads IPIWIYAVIVVLGWNEFMIVI. Residues 699–701 lie on the Lumenal side of the membrane; that stretch reads RNP. Residues 702–722 traverse the membrane as a helical segment; the sequence is LFVTLALLSIVSFYFIQKFGL. The Cytoplasmic segment spans residues 723–783; that stretch reads WGPVMNVVNT…SSSSGNEDSD (61 aa).

It belongs to the TRAFAC class dynamin-like GTPase superfamily. GB1/RHD3 GTPase family. RHD3 subfamily.

Its subcellular location is the endoplasmic reticulum membrane. Cooperates with the reticulon proteins and tubule-shaping DP1 family proteins to generate and maintain the structure of the tubular endoplasmic reticulum network. Has GTPase activity, which is required for its function in ER organization. The sequence is that of Protein SEY1 from Candida glabrata (strain ATCC 2001 / BCRC 20586 / JCM 3761 / NBRC 0622 / NRRL Y-65 / CBS 138) (Yeast).